The following is a 187-amino-acid chain: Chromophore lyase CpcS/CpeS 2 (187 aa).

This sequence belongs to the CpcS/CpeS biliprotein lyase family.

In terms of biological role, covalently attaches a chromophore to Cys residue(s) of phycobiliproteins. The sequence is that of Chromophore lyase CpcS/CpeS 2 from Synechococcus sp. (strain JA-3-3Ab) (Cyanobacteria bacterium Yellowstone A-Prime).